We begin with the raw amino-acid sequence, 438 residues long: Enolase (438 aa).

Glutamine 174 is a (2R)-2-phosphoglycerate binding site. Glutamate 216 (proton donor) is an active-site residue. Residues aspartate 253, glutamate 297, and aspartate 324 each contribute to the Mg(2+) site. (2R)-2-phosphoglycerate is bound by residues lysine 349, arginine 378, serine 379, and lysine 400. Lysine 349 functions as the Proton acceptor in the catalytic mechanism.

It belongs to the enolase family. Component of the RNA degradosome, a multiprotein complex involved in RNA processing and mRNA degradation. Mg(2+) is required as a cofactor.

The protein localises to the cytoplasm. It is found in the secreted. It localises to the cell surface. The catalysed reaction is (2R)-2-phosphoglycerate = phosphoenolpyruvate + H2O. Its pathway is carbohydrate degradation; glycolysis; pyruvate from D-glyceraldehyde 3-phosphate: step 4/5. Functionally, catalyzes the reversible conversion of 2-phosphoglycerate (2-PG) into phosphoenolpyruvate (PEP). It is essential for the degradation of carbohydrates via glycolysis. The polypeptide is Enolase (Psychrobacter sp. (strain PRwf-1)).